The chain runs to 307 residues: Olfactory receptor 5AC1 (307 aa).

At 1 to 28 the chain is on the extracellular side; the sequence is MAEENKILVTHFVLTGLTDHPGLQAPLF. A helical membrane pass occupies residues 29-49; it reads LVFLVIYLITLVGNLGLMALI. Residues 50 to 56 lie on the Cytoplasmic side of the membrane; that stretch reads WKDPHLH. The chain crosses the membrane as a helical span at residues 57–77; that stretch reads TPIYLFLGSLAFADACTSSSV. The Extracellular portion of the chain corresponds to 78–99; that stretch reads TSKMLINFLSKNHMLSMAKCAT. Cysteines 97 and 179 form a disulfide. The chain crosses the membrane as a helical span at residues 100 to 120; the sequence is QFYFFGSNATTECFLLVVMAY. At 121-143 the chain is on the cytoplasmic side; sequence DRYVAICNPLLYPVVMSNSLCTQ. The helical transmembrane segment at 144–164 threads the bilayer; sequence FIGISYFIGFLHSAIHVGLLF. Residues 165–195 are Extracellular-facing; sequence RLTFCRSNIIHYFYCEILQLFKISCTNPTVN. The helical transmembrane segment at 196 to 216 threads the bilayer; sequence ILLIFIFSAFIQVFTFMTLIV. The Cytoplasmic segment spans residues 217-239; it reads SYSYILSAILKKKSEKGRSKAFS. Residues 240–260 form a helical membrane-spanning segment; sequence TCSAHLLSVSLFYGTLFFMYV. Over 261 to 271 the chain is Extracellular; sequence SSRSGSAADQA. Residues 272–292 traverse the membrane as a helical segment; sequence KMYSLFYTIIIPLLNPFIYSL. At 293–307 the chain is on the cytoplasmic side; sequence RNKEVIDALRRIMKK.

It belongs to the G-protein coupled receptor 1 family.

Its subcellular location is the cell membrane. Odorant receptor. The chain is Olfactory receptor 5AC1 (OR5AC1) from Homo sapiens (Human).